Reading from the N-terminus, the 280-residue chain is 2-dehydro-3-deoxyphosphooctonate aldolase (280 aa).

Belongs to the KdsA family.

The protein resides in the cytoplasm. It carries out the reaction D-arabinose 5-phosphate + phosphoenolpyruvate + H2O = 3-deoxy-alpha-D-manno-2-octulosonate-8-phosphate + phosphate. It functions in the pathway carbohydrate biosynthesis; 3-deoxy-D-manno-octulosonate biosynthesis; 3-deoxy-D-manno-octulosonate from D-ribulose 5-phosphate: step 2/3. It participates in bacterial outer membrane biogenesis; lipopolysaccharide biosynthesis. In Neisseria meningitidis serogroup C / serotype 2a (strain ATCC 700532 / DSM 15464 / FAM18), this protein is 2-dehydro-3-deoxyphosphooctonate aldolase.